The chain runs to 263 residues: Endonuclease 8 (263 aa).

Proline 2 serves as the catalytic Schiff-base intermediate with DNA. Residue glutamate 3 is the Proton donor of the active site. Residue lysine 53 is the Proton donor; for beta-elimination activity of the active site. DNA contacts are provided by glutamine 70, arginine 125, and asparagine 169. Residues 229 to 263 form an FPG-type zinc finger; the sequence is KVFHRDGEVCERCGGIIEKTTLSSRPFYWCPHCQK. Arginine 253 serves as the catalytic Proton donor; for delta-elimination activity.

This sequence belongs to the FPG family. Zn(2+) is required as a cofactor.

The enzyme catalyses 2'-deoxyribonucleotide-(2'-deoxyribose 5'-phosphate)-2'-deoxyribonucleotide-DNA = a 3'-end 2'-deoxyribonucleotide-(2,3-dehydro-2,3-deoxyribose 5'-phosphate)-DNA + a 5'-end 5'-phospho-2'-deoxyribonucleoside-DNA + H(+). In terms of biological role, involved in base excision repair of DNA damaged by oxidation or by mutagenic agents. Acts as a DNA glycosylase that recognizes and removes damaged bases. Has a preference for oxidized pyrimidines, such as thymine glycol, 5,6-dihydrouracil and 5,6-dihydrothymine. Has AP (apurinic/apyrimidinic) lyase activity and introduces nicks in the DNA strand. Cleaves the DNA backbone by beta-delta elimination to generate a single-strand break at the site of the removed base with both 3'- and 5'-phosphates. This Salmonella newport (strain SL254) protein is Endonuclease 8.